Here is a 365-residue protein sequence, read N- to C-terminus: Probable receptor-like protein kinase At2g47060 (365 aa).

The interval 18-48 is disordered; it reads DYGGRHNQAKHFPPGNDARHHQASETAQKGP. Positions 73-353 constitute a Protein kinase domain; sequence FGSNSLIGEG…IVVKALQPLL (281 aa). ATP-binding positions include 79-87 and lysine 101; that span reads IGEGSYGRV. At tyrosine 145 the chain carries Phosphotyrosine. Aspartate 203 functions as the Proton acceptor in the catalytic mechanism. A phosphoserine mark is found at serine 207 and serine 237. 2 positions are modified to phosphothreonine: threonine 238 and threonine 243. Position 251 is a phosphotyrosine (tyrosine 251).

It belongs to the protein kinase superfamily. Ser/Thr protein kinase family.

It carries out the reaction L-seryl-[protein] + ATP = O-phospho-L-seryl-[protein] + ADP + H(+). It catalyses the reaction L-threonyl-[protein] + ATP = O-phospho-L-threonyl-[protein] + ADP + H(+). The sequence is that of Probable receptor-like protein kinase At2g47060 from Arabidopsis thaliana (Mouse-ear cress).